The chain runs to 160 residues: NAD(P)H-quinone oxidoreductase subunit I, chloroplastic (160 aa).

2 consecutive 4Fe-4S ferredoxin-type domains span residues 55 to 84 (GRIH…VDWK) and 95 to 124 (LNYS…MTEE). The [4Fe-4S] cluster site is built by C64, C67, C70, C74, C104, C107, C110, and C114.

This sequence belongs to the complex I 23 kDa subunit family. In terms of assembly, NDH is composed of at least 16 different subunits, 5 of which are encoded in the nucleus. It depends on [4Fe-4S] cluster as a cofactor.

Its subcellular location is the plastid. It localises to the chloroplast thylakoid membrane. It catalyses the reaction a plastoquinone + NADH + (n+1) H(+)(in) = a plastoquinol + NAD(+) + n H(+)(out). The catalysed reaction is a plastoquinone + NADPH + (n+1) H(+)(in) = a plastoquinol + NADP(+) + n H(+)(out). Its function is as follows. NDH shuttles electrons from NAD(P)H:plastoquinone, via FMN and iron-sulfur (Fe-S) centers, to quinones in the photosynthetic chain and possibly in a chloroplast respiratory chain. The immediate electron acceptor for the enzyme in this species is believed to be plastoquinone. Couples the redox reaction to proton translocation, and thus conserves the redox energy in a proton gradient. The polypeptide is NAD(P)H-quinone oxidoreductase subunit I, chloroplastic (Cucumis sativus (Cucumber)).